A 232-amino-acid chain; its full sequence is Ras-related protein RabP (232 aa).

15–22 (GNYGVGKS) contributes to the GTP binding site. The Effector region signature appears at 35–40 (DNTTGF). GTP-binding positions include 58–62 (DTSGQ) and 118–121 (NKFD). 2 S-geranylgeranyl cysteine lipidation sites follow: C229 and C230.

It belongs to the small GTPase superfamily. Rab family.

It is found in the cell membrane. In Dictyostelium discoideum (Social amoeba), this protein is Ras-related protein RabP (rabP).